Consider the following 822-residue polypeptide: Glycerol-3-phosphate acyltransferase (822 aa).

An HXXXXD motif motif is present at residues 306–311 (CHRSHM). Residues 803–822 (ASSSAEMEAESQAVEETTQE) form a disordered region.

This sequence belongs to the GPAT/DAPAT family.

The protein resides in the cell inner membrane. It catalyses the reaction sn-glycerol 3-phosphate + an acyl-CoA = a 1-acyl-sn-glycero-3-phosphate + CoA. It functions in the pathway phospholipid metabolism; CDP-diacylglycerol biosynthesis; CDP-diacylglycerol from sn-glycerol 3-phosphate: step 1/3. The polypeptide is Glycerol-3-phosphate acyltransferase (Pectobacterium carotovorum subsp. carotovorum (strain PC1)).